A 407-amino-acid polypeptide reads, in one-letter code: Argininosuccinate synthase (407 aa).

Residues 16–24 and A44 each bind ATP; that span reads AYSGGLDTS. The L-citrulline site is built by Y96 and S101. ATP is bound at residue G126. L-aspartate is bound by residues T128, N132, and D133. Position 132 (N132) interacts with L-citrulline. Residues R136, S185, S194, E270, and Y282 each coordinate L-citrulline.

It belongs to the argininosuccinate synthase family. Type 1 subfamily. As to quaternary structure, homotetramer.

Its subcellular location is the cytoplasm. It catalyses the reaction L-citrulline + L-aspartate + ATP = 2-(N(omega)-L-arginino)succinate + AMP + diphosphate + H(+). The protein operates within amino-acid biosynthesis; L-arginine biosynthesis; L-arginine from L-ornithine and carbamoyl phosphate: step 2/3. The polypeptide is Argininosuccinate synthase (Shewanella amazonensis (strain ATCC BAA-1098 / SB2B)).